A 142-amino-acid polypeptide reads, in one-letter code: Putative pre-16S rRNA nuclease (142 aa).

This sequence belongs to the YqgF nuclease family.

Its subcellular location is the cytoplasm. Its function is as follows. Could be a nuclease involved in processing of the 5'-end of pre-16S rRNA. The protein is Putative pre-16S rRNA nuclease of Lactobacillus acidophilus (strain ATCC 700396 / NCK56 / N2 / NCFM).